We begin with the raw amino-acid sequence, 64 residues long: Beta-defensin 1 (64 aa).

The first 22 residues, 1–22, serve as a signal peptide directing secretion; it reads MRLHHLLLVLFFVVLSAGSGFT. 3 disulfides stabilise this stretch: cysteine 31–cysteine 60, cysteine 38–cysteine 53, and cysteine 43–cysteine 61.

It belongs to the beta-defensin family. In terms of assembly, monomer. Homodimer.

The protein localises to the secreted. Its subcellular location is the membrane. In terms of biological role, has bactericidal activity. May act as a ligand for C-C chemokine receptor CCR6. Positively regulates the sperm motility and bactericidal activity in a CCR6-dependent manner. Binds to CCR6 and triggers Ca2+ mobilization in the sperm which is important for its motility. In Ovis aries (Sheep), this protein is Beta-defensin 1 (DEFB1).